The primary structure comprises 71 residues: MAKPDNRNDNVEKLQEMVQDTIENLEEAHETLQNNSLSRDQRQAIMEKNKRREESIRSFRNEIKDEYQDLH.

Residues 30–56 (ETLQNNSLSRDQRQAIMEKNKRREESI) form a disordered region. The span at 39 to 56 (RDQRQAIMEKNKRREESI) shows a compositional bias: basic and acidic residues.

Belongs to the Tlp family.

This chain is Protein Tlp homolog, found in Desulforamulus reducens (strain ATCC BAA-1160 / DSM 100696 / MI-1) (Desulfotomaculum reducens).